A 280-amino-acid chain; its full sequence is Protein FLOURY 1-like (280 aa).

A helical membrane pass occupies residues 22–42; that stretch reads GFGFGIFVIGCSSQFFNLVFL. The disordered stretch occupies residues 153-187; the sequence is VALSETELDEKNHHGEEEESEDEEESQSQNDEDQL. Residues 169–187 are compositionally biased toward acidic residues; sequence EEESEDEEESQSQNDEDQL. The region spanning 188–280 is the GTD-binding domain; sequence LDVITLRTMV…LDDDEDKIQM (93 aa).

The protein resides in the membrane. The polypeptide is Protein FLOURY 1-like (Arabidopsis thaliana (Mouse-ear cress)).